A 566-amino-acid chain; its full sequence is ATP-binding protein SyrD (566 aa).

The ABC transmembrane type-1 domain occupies 22–301 (HPWLTFFTLL…LVSAMPMLAQ (280 aa)). The next 6 helical transmembrane spans lie at 24-44 (WLTF…IAVV), 61-81 (LFWF…ASLF), 132-152 (LLIM…IAYL), 158-178 (VVFA…LLFF), 250-270 (QLTL…FAVI), and 279-299 (VLAV…MPML). In terms of domain architecture, ABC transporter spans 343-566 (IQLKNVHMNY…VKCAVEGKRA (224 aa)). 380 to 387 (GGNGCGKS) serves as a coordination point for ATP.

It belongs to the ABC transporter superfamily. Dimer.

It localises to the cell inner membrane. Its function is as follows. ATP-driven efflux pump necessary for the secretion of syringomycin. May specifically bind syringomycin and translocate it to the periplasmic space. SyrD is also required for full expression of the syrB gene. This chain is ATP-binding protein SyrD (syrD), found in Pseudomonas syringae pv. syringae.